The chain runs to 357 residues: Alanine racemase (357 aa).

Lys-34 (proton acceptor; specific for D-alanine) is an active-site residue. At Lys-34 the chain carries N6-(pyridoxal phosphate)lysine. Arg-130 is a substrate binding site. The Proton acceptor; specific for L-alanine role is filled by Tyr-253. Met-301 contacts substrate.

The protein belongs to the alanine racemase family. The cofactor is pyridoxal 5'-phosphate.

The enzyme catalyses L-alanine = D-alanine. It functions in the pathway amino-acid biosynthesis; D-alanine biosynthesis; D-alanine from L-alanine: step 1/1. In terms of biological role, catalyzes the interconversion of L-alanine and D-alanine. May also act on other amino acids. The polypeptide is Alanine racemase (alr) (Mannheimia succiniciproducens (strain KCTC 0769BP / MBEL55E)).